The primary structure comprises 394 residues: Tryptophan synthase beta chain (394 aa).

Position 84 is an N6-(pyridoxal phosphate)lysine (K84).

It belongs to the TrpB family. Tetramer of two alpha and two beta chains. Pyridoxal 5'-phosphate is required as a cofactor.

The enzyme catalyses (1S,2R)-1-C-(indol-3-yl)glycerol 3-phosphate + L-serine = D-glyceraldehyde 3-phosphate + L-tryptophan + H2O. The protein operates within amino-acid biosynthesis; L-tryptophan biosynthesis; L-tryptophan from chorismate: step 5/5. In terms of biological role, the beta subunit is responsible for the synthesis of L-tryptophan from indole and L-serine. The chain is Tryptophan synthase beta chain from Clostridium acetobutylicum (strain ATCC 824 / DSM 792 / JCM 1419 / IAM 19013 / LMG 5710 / NBRC 13948 / NRRL B-527 / VKM B-1787 / 2291 / W).